Reading from the N-terminus, the 52-residue chain is Large ribosomal subunit protein bL32c (52 aa).

It belongs to the bacterial ribosomal protein bL32 family.

Its subcellular location is the plastid. It localises to the chloroplast. This Olimarabidopsis pumila (Dwarf rocket) protein is Large ribosomal subunit protein bL32c.